We begin with the raw amino-acid sequence, 478 residues long: Protein MAINTENANCE OF MERISTEMS (478 aa).

The tract at residues 459–478 is disordered; sequence ASTTNKRKRREEQQQTDWSE. Positions 464–468 match the Nuclear localization signal motif; the sequence is KRKRR.

Expressed in root meristem, root vasculature, shoot apical meristem (SAM), leaf vasculature and ovules.

It localises to the nucleus. Functionally, required for the organization of the root apical meristem (RAM) and the shoot apical meristem (SAM). Required to maintain genome stability and cell division activity in meristematic cells. The polypeptide is Protein MAINTENANCE OF MERISTEMS (Arabidopsis thaliana (Mouse-ear cress)).